Consider the following 424-residue polypeptide: MAFLALGINHKTASVDVRERVAFTPEQLVEALQQLCRLTDSREAAILSTCNRSELYIEQDHLSADVVLRWLAEYHHLSLDELRASAYVHEDDAAVRHMMRVASGLDSLVLGEPQILGQMKSAYAVAREAGTVGPLLGRLFQATFSAAKQVRTDTAIGENPVSVAFAAVSLAKQIFSDLQRSQALLIGAGETITLVARHLHDLGVKRIVVANRTLERASLLAEQFGAHAVLLSDIPQELVHSDIVISSTASQLPILGKGAVESALKLRKHKPIFMVDIAVPRDIEPEVGELDDVYLYTVDDLHEVVAENLKSRQGAAQAAEELVNIGAEDFMVRLRELAAVDVLKAYRQQSERLRDEELQKALRMLANGSGAEDVLAQLARGLTNKLLHAPSVQLKKLSAEGRLDALAMAQELFALGEGSSDKTP.

Residues 49–52, Ser-107, 112–114, and Gln-118 each bind substrate; these read TCNR and EPQ. Residue Cys-50 is the Nucleophile of the active site. 187-192 is an NADP(+) binding site; it reads GAGETI.

This sequence belongs to the glutamyl-tRNA reductase family. As to quaternary structure, homodimer.

The catalysed reaction is (S)-4-amino-5-oxopentanoate + tRNA(Glu) + NADP(+) = L-glutamyl-tRNA(Glu) + NADPH + H(+). The protein operates within porphyrin-containing compound metabolism; protoporphyrin-IX biosynthesis; 5-aminolevulinate from L-glutamyl-tRNA(Glu): step 1/2. Functionally, catalyzes the NADPH-dependent reduction of glutamyl-tRNA(Glu) to glutamate 1-semialdehyde (GSA). This chain is Glutamyl-tRNA reductase, found in Pseudomonas fluorescens (strain ATCC BAA-477 / NRRL B-23932 / Pf-5).